The primary structure comprises 447 residues: Probable glycine dehydrogenase (decarboxylating) subunit 1 (447 aa).

It belongs to the GcvP family. N-terminal subunit subfamily. As to quaternary structure, the glycine cleavage system is composed of four proteins: P, T, L and H. In this organism, the P 'protein' is a heterodimer of two subunits.

The catalysed reaction is N(6)-[(R)-lipoyl]-L-lysyl-[glycine-cleavage complex H protein] + glycine + H(+) = N(6)-[(R)-S(8)-aminomethyldihydrolipoyl]-L-lysyl-[glycine-cleavage complex H protein] + CO2. The glycine cleavage system catalyzes the degradation of glycine. The P protein binds the alpha-amino group of glycine through its pyridoxal phosphate cofactor; CO(2) is released and the remaining methylamine moiety is then transferred to the lipoamide cofactor of the H protein. The polypeptide is Probable glycine dehydrogenase (decarboxylating) subunit 1 (Sulfolobus acidocaldarius (strain ATCC 33909 / DSM 639 / JCM 8929 / NBRC 15157 / NCIMB 11770)).